Reading from the N-terminus, the 485-residue chain is Calcium/manganese antiporter SLC30A10 (485 aa).

Topologically, residues Met1–Arg10 are cytoplasmic. The helical transmembrane segment at Leu11–Leu31 threads the bilayer. The Extracellular segment spans residues Gly32–Asp40. A helical membrane pass occupies residues Ser41 to Ala61. The Cytoplasmic portion of the chain corresponds to Arg62–Gly81. The chain crosses the membrane as a helical span at residues Ala82–Leu102. Residues Arg103–Pro113 are Extracellular-facing. A helical transmembrane segment spans residues Glu114–Phe134. Topologically, residues Gln135–His244 are cytoplasmic. Residues Phe167–Thr196 are disordered. A helical membrane pass occupies residues Val245–Leu265. Over Pro266 to Tyr278 the chain is Extracellular. The helical transmembrane segment at Ile279–Ile299 threads the bilayer. The Cytoplasmic segment spans residues Lys300 to Phe485. The interval Gln308–Phe485 is required for plasma membrane localization.

It belongs to the cation diffusion facilitator (CDF) transporter (TC 2.A.4) family. SLC30A subfamily. As to quaternary structure, forms homodimers. Forms heterodimers and high-molecular weight oligomers with SLC30A3, SLC30A2 and SLC30A4; heterodimerization is mediated by covalent-bound tyrosine residues, occurs probably in a tissue-specific manner and could mediate the intracellular zinc transport activity into early endosomes and recycling endosomes. In terms of tissue distribution, specifically expressed in fetal liver and fetal brain. Expressed in adult tissues with relative levels small intestine &gt; liver &gt; testes &gt; brain &gt; ovary &gt; colon &gt; cervix &gt; prostate &gt; placenta. Expressed in liver and neurons of the nervous system (at protein level).

The protein localises to the cell membrane. It is found in the golgi apparatus membrane. It localises to the recycling endosome membrane. The protein resides in the early endosome membrane. The enzyme catalyses Mn(2+)(out) + Ca(2+)(in) = Mn(2+)(in) + Ca(2+)(out). The catalysed reaction is Zn(2+)(in) = Zn(2+)(out). Calcium:manganese antiporter of the plasma membrane mediating the efflux of intracellular manganese coupled to an active extracellular calcium exchange. Required for intracellular manganese homeostasis, an essential cation for the function of several enzymes, including some crucially important for the metabolism of neurotransmitters and other neuronal metabolic pathways. Manganese can also be cytotoxic and induce oxidative stress, mitochondrial dysfunction and apoptosis. Could also have an intracellular zinc ion transporter activity, directly regulating intracellular zinc ion homeostasis and more indirectly various signaling pathway and biological processes. The polypeptide is Calcium/manganese antiporter SLC30A10 (Homo sapiens (Human)).